A 638-amino-acid polypeptide reads, in one-letter code: Chaperone protein DnaK (638 aa).

A Phosphothreonine; by autocatalysis modification is found at Thr-198. Positions 598 to 638 (YEASQKEAAEADAKADAAKDSDVVDADFEEIDEDDDKKKSA) are disordered. Residues 601–619 (SQKEAAEADAKADAAKDSD) are compositionally biased toward basic and acidic residues. Residues 620-632 (VVDADFEEIDEDD) are compositionally biased toward acidic residues.

Belongs to the heat shock protein 70 family.

Its function is as follows. Acts as a chaperone. The chain is Chaperone protein DnaK from Mesorhizobium japonicum (strain LMG 29417 / CECT 9101 / MAFF 303099) (Mesorhizobium loti (strain MAFF 303099)).